A 36-amino-acid chain; its full sequence is Serum amyloid P-component (36 aa).

In terms of domain architecture, Pentraxin (PTX) spans 6 to 36; sequence SGKVFVIPMATSTSHVKLHARVSEPISAMTM.

Belongs to the pentraxin family. As to quaternary structure, homopentamer. Discoid arrangement of 5 covalently bound subunits. Ca(2+) serves as cofactor.

It is found in the secreted. This Salmo salar (Atlantic salmon) protein is Serum amyloid P-component.